A 952-amino-acid polypeptide reads, in one-letter code: Valine--tRNA ligase (952 aa).

A 'HIGH' region motif is present at residues 45-55; it reads PNVTGSLHMGH. The short motif at 571-575 is the 'KMSKS' region element; the sequence is KMSKS. Residue Lys574 participates in ATP binding. Positions 894-950 form a coiled coil; sequence KEIAKADADIARVDLKLADQNFIANAPGEIVEDEKEKREAAAARKAKFVEALERLKA.

The protein belongs to the class-I aminoacyl-tRNA synthetase family. ValS type 1 subfamily. Monomer.

The protein resides in the cytoplasm. The enzyme catalyses tRNA(Val) + L-valine + ATP = L-valyl-tRNA(Val) + AMP + diphosphate. Functionally, catalyzes the attachment of valine to tRNA(Val). As ValRS can inadvertently accommodate and process structurally similar amino acids such as threonine, to avoid such errors, it has a 'posttransfer' editing activity that hydrolyzes mischarged Thr-tRNA(Val) in a tRNA-dependent manner. This is Valine--tRNA ligase from Nitrobacter winogradskyi (strain ATCC 25391 / DSM 10237 / CIP 104748 / NCIMB 11846 / Nb-255).